The primary structure comprises 164 residues: FMN reductase (NADH) RutF (164 aa).

This sequence belongs to the non-flavoprotein flavin reductase family. RutF subfamily.

It catalyses the reaction FMNH2 + NAD(+) = FMN + NADH + 2 H(+). Catalyzes the reduction of FMN to FMNH2 which is used to reduce pyrimidine by RutA via the Rut pathway. This chain is FMN reductase (NADH) RutF, found in Escherichia coli O45:K1 (strain S88 / ExPEC).